Reading from the N-terminus, the 497-residue chain is Guanosine-5'-triphosphate,3'-diphosphate pyrophosphatase (497 aa).

It belongs to the GppA/Ppx family. GppA subfamily.

It catalyses the reaction guanosine 3'-diphosphate 5'-triphosphate + H2O = guanosine 3',5'-bis(diphosphate) + phosphate + H(+). It functions in the pathway purine metabolism; ppGpp biosynthesis; ppGpp from GTP: step 2/2. Functionally, catalyzes the conversion of pppGpp to ppGpp. Guanosine pentaphosphate (pppGpp) is a cytoplasmic signaling molecule which together with ppGpp controls the 'stringent response', an adaptive process that allows bacteria to respond to amino acid starvation, resulting in the coordinated regulation of numerous cellular activities. The sequence is that of Guanosine-5'-triphosphate,3'-diphosphate pyrophosphatase from Vibrio campbellii (strain ATCC BAA-1116).